The primary structure comprises 428 residues: Trigger factor (428 aa).

The PPIase FKBP-type domain occupies 163–248 (GDTVVIDFEG…LHEIKTKQLP (86 aa)).

This sequence belongs to the FKBP-type PPIase family. Tig subfamily.

It is found in the cytoplasm. It catalyses the reaction [protein]-peptidylproline (omega=180) = [protein]-peptidylproline (omega=0). In terms of biological role, involved in protein export. Acts as a chaperone by maintaining the newly synthesized protein in an open conformation. Functions as a peptidyl-prolyl cis-trans isomerase. This Anoxybacillus flavithermus (strain DSM 21510 / WK1) protein is Trigger factor.